A 139-amino-acid polypeptide reads, in one-letter code: Cytochrome c-type biogenesis protein CcmE (139 aa).

Residues 1 to 7 (MTKRQNR) lie on the Cytoplasmic side of the membrane. The chain crosses the membrane as a helical; Signal-anchor for type II membrane protein span at residues 8–28 (MTLVALLVIGVSLTGYLGLKA). Over 29 to 139 (FNENLLYFFS…ADALEKAKNK (111 aa)) the chain is Periplasmic. Positions 120 and 124 each coordinate heme.

It belongs to the CcmE/CycJ family.

The protein localises to the cell inner membrane. Its function is as follows. Heme chaperone required for the biogenesis of c-type cytochromes. Transiently binds heme delivered by CcmC and transfers the heme to apo-cytochromes in a process facilitated by CcmF and CcmH. This is Cytochrome c-type biogenesis protein CcmE from Ruthia magnifica subsp. Calyptogena magnifica.